The following is a 95-amino-acid chain: Aspartyl/glutamyl-tRNA(Asn/Gln) amidotransferase subunit C (95 aa).

Belongs to the GatC family. In terms of assembly, heterotrimer of A, B and C subunits.

The catalysed reaction is L-glutamyl-tRNA(Gln) + L-glutamine + ATP + H2O = L-glutaminyl-tRNA(Gln) + L-glutamate + ADP + phosphate + H(+). It catalyses the reaction L-aspartyl-tRNA(Asn) + L-glutamine + ATP + H2O = L-asparaginyl-tRNA(Asn) + L-glutamate + ADP + phosphate + 2 H(+). Functionally, allows the formation of correctly charged Asn-tRNA(Asn) or Gln-tRNA(Gln) through the transamidation of misacylated Asp-tRNA(Asn) or Glu-tRNA(Gln) in organisms which lack either or both of asparaginyl-tRNA or glutaminyl-tRNA synthetases. The reaction takes place in the presence of glutamine and ATP through an activated phospho-Asp-tRNA(Asn) or phospho-Glu-tRNA(Gln). This is Aspartyl/glutamyl-tRNA(Asn/Gln) amidotransferase subunit C from Geotalea uraniireducens (strain Rf4) (Geobacter uraniireducens).